The chain runs to 497 residues: Protein nucleotidyltransferase YdiU (497 aa).

Residues G88, G90, R91, K110, D122, G123, R173, and R180 each contribute to the ATP site. The Proton acceptor role is filled by D249. Residues N250 and D259 each coordinate Mg(2+). D259 is an ATP binding site.

Belongs to the SELO family. Mg(2+) serves as cofactor. Requires Mn(2+) as cofactor.

It catalyses the reaction L-seryl-[protein] + ATP = 3-O-(5'-adenylyl)-L-seryl-[protein] + diphosphate. The enzyme catalyses L-threonyl-[protein] + ATP = 3-O-(5'-adenylyl)-L-threonyl-[protein] + diphosphate. The catalysed reaction is L-tyrosyl-[protein] + ATP = O-(5'-adenylyl)-L-tyrosyl-[protein] + diphosphate. It carries out the reaction L-histidyl-[protein] + UTP = N(tele)-(5'-uridylyl)-L-histidyl-[protein] + diphosphate. It catalyses the reaction L-seryl-[protein] + UTP = O-(5'-uridylyl)-L-seryl-[protein] + diphosphate. The enzyme catalyses L-tyrosyl-[protein] + UTP = O-(5'-uridylyl)-L-tyrosyl-[protein] + diphosphate. Its function is as follows. Nucleotidyltransferase involved in the post-translational modification of proteins. It can catalyze the addition of adenosine monophosphate (AMP) or uridine monophosphate (UMP) to a protein, resulting in modifications known as AMPylation and UMPylation. The protein is Protein nucleotidyltransferase YdiU of Methylorubrum extorquens (strain CM4 / NCIMB 13688) (Methylobacterium extorquens).